Consider the following 910-residue polypeptide: Epithelial discoidin domain-containing receptor 1 (910 aa).

The N-terminal stretch at 1–19 (MGTGTLSSLLLLLLLVTIG) is a signal peptide. The Extracellular segment spans residues 22–414 (DMKGHFDPAK…VAKAEGSPTA (393 aa)). The region spanning 32 to 186 (CRYALGMQDR…VCLRVELYGC (155 aa)) is the F5/8 type C domain. Disulfide bonds link C32/C186 and C75/C178. A DS-like domain region spans residues 193–368 (LSYTAPVGQT…LFSEISFISD (176 aa)). Residues N212, Q231, D234, V236, Y254, and Y256 each coordinate Ca(2+). A glycan (N-linked (GlcNAc...) asparagine) is linked at N212. A glycan (N-linked (GlcNAc...) asparagine) is linked at N261. Cysteines 304 and 349 form a disulfide. Ca(2+) is bound by residues S361 and E362. Residues N371 and N391 are each glycosylated (N-linked (GlcNAc...) asparagine). A helical transmembrane segment spans residues 415-435 (ILIGCLVAIILLLLLIIALML). Residues 436–910 (WRLHWRRLLS…FLADDALNTV (475 aa)) are Cytoplasmic-facing. Positions 467-494 (ILINNRPGPREPPPYQEPRPRGTPTHSA) are disordered. The PPxY motif signature appears at 478–481 (PPPY). Phosphotyrosine; by autocatalysis is present on residues Y481, Y510, and Y517. One can recognise a Protein kinase domain in the interval 607-902 (LRFKEKLGEG…PPFSQLHRFL (296 aa)). Residues 613–621 (LGEGQFGEV) and K652 contribute to the ATP site. Y737 carries the phosphotyrosine; by autocatalysis modification. The active-site Proton acceptor is D763. Phosphotyrosine; by autocatalysis occurs at positions 789, 793, and 794.

It belongs to the protein kinase superfamily. Tyr protein kinase family. Insulin receptor subfamily. As to quaternary structure, homodimer. Interacts (via PPxY motif) with WWC1 (via WW domains) in a collagen-regulated manner. Forms a tripartite complex with WWC1 and PRKCZ, but predominantly in the absence of collagen. Interacts (tyrosine phosphorylated) with SHC1. Interacts with SRC. Interacts with MYH9. Interacts with CDH1. Interacts with PTPN11. Interacts with NCK2. In terms of processing, autophosphorylated in response to fibrillar collagen binding. Various embryonic and adult tissues; also proliferative zones of the developing brain; hippocampal neurons.

Its subcellular location is the cell membrane. It catalyses the reaction L-tyrosyl-[protein] + ATP = O-phospho-L-tyrosyl-[protein] + ADP + H(+). Its function is as follows. Tyrosine kinase that functions as a cell surface receptor for fibrillar collagen and regulates cell attachment to the extracellular matrix, remodeling of the extracellular matrix, cell migration, differentiation, survival and cell proliferation. Collagen binding triggers a signaling pathway that involves SRC and leads to the activation of MAP kinases. Regulates remodeling of the extracellular matrix by up-regulation of the matrix metalloproteinases MMP2, MMP7 and MMP9, and thereby facilitates cell migration and wound healing. Promotes smooth muscle cell migration, and thereby contributes to arterial wound healing. Also plays a role in tumor cell invasion. Phosphorylates PTPN11. Required for normal blastocyst implantation during pregnancy, for normal mammary gland differentiation and normal lactation. Required for normal ear morphology and normal hearing. This chain is Epithelial discoidin domain-containing receptor 1 (Ddr1), found in Rattus norvegicus (Rat).